The primary structure comprises 218 residues: Cytidylate kinase (218 aa).

11–19 (GPGASGKGT) is an ATP binding site.

This sequence belongs to the cytidylate kinase family. Type 1 subfamily.

It localises to the cytoplasm. It catalyses the reaction CMP + ATP = CDP + ADP. The catalysed reaction is dCMP + ATP = dCDP + ADP. The sequence is that of Cytidylate kinase from Neisseria meningitidis serogroup A / serotype 4A (strain DSM 15465 / Z2491).